Here is a 476-residue protein sequence, read N- to C-terminus: Protein EARLY HEADING DATE 2 (476 aa).

Over residues 1–13 (MLLSDLSSDQEAT) the composition is skewed to polar residues. A disordered region spans residues 1–27 (MLLSDLSSDQEATGSNSHGGGGGGDRM). 2 consecutive C2H2-type zinc fingers follow at residues 106-128 (FVCE…RRGH) and 156-186 (YVCP…SRKH). 2 short sequence motifs (nuclear localization signal) span residues 124–131 (HRRGHNLP) and 178–185 (IKKHFSRK). Residues 191-214 (WRCERCGKRYAVHSDWKAHVKNCG) form a C2H2-type 2; degenerate zinc finger. Zn(2+) contacts are provided by C193, C196, H209, C213, C220, C222, H235, and C239. The CCHC-type 2; atypical zinc finger occupies 218–241 (YRCDCGILFSRKDSLLTHRAFCDA). The segment at 228–240 (RKDSLLTHRAFCD) is SHR-binding.

The protein resides in the nucleus. Functionally, transcription activator that acts as a flowering master switch in both long and short days, independently of the circadian clock. Promotes flowering upstream of HD1 by up-regulating FTL1, FTL4, FTL5, FTL6, EHD1, HD3A and RFT1. Seems to repress FTL11 expression. May recognize the consensus motif 5'-TTTGTCGTAAT-3' in target gene promoters. This is Protein EARLY HEADING DATE 2 from Oryza sativa subsp. indica (Rice).